The chain runs to 264 residues: MKTYLDLLSHVLNKGIDRTDRTGVGTRSVFGYQMRFDLQIGFPLLTTKKLHLRSIIYELLWFLRGDTNVAWLKEHGVSIWDEWADEKGNLGPIYGYQWRSWPASDGRYIDQISRLLTMIKKTPDSRRLIVSAWNPALIEEMALPPCHCFFQFYVADDKLSCQLYQRSADIFLGVPFNIASYALLTMMIAQVSGLKAGDFIHTLGDAHLYSNHFEQARYQLSRIPNALPSMLINPSVTDLFSFKFEDFELLNYEAQPHIKAPVAV.

Arginine 21 serves as a coordination point for dUMP. Residue histidine 51 participates in (6R)-5,10-methylene-5,6,7,8-tetrahydrofolate binding. 126 to 127 (RR) provides a ligand contact to dUMP. Cysteine 146 acts as the Nucleophile in catalysis. Residues 166-169 (RSAD), asparagine 177, and 207-209 (HLY) each bind dUMP. A (6R)-5,10-methylene-5,6,7,8-tetrahydrofolate-binding site is contributed by aspartate 169. Alanine 263 contributes to the (6R)-5,10-methylene-5,6,7,8-tetrahydrofolate binding site.

The protein belongs to the thymidylate synthase family. Bacterial-type ThyA subfamily. As to quaternary structure, homodimer.

It is found in the cytoplasm. It catalyses the reaction dUMP + (6R)-5,10-methylene-5,6,7,8-tetrahydrofolate = 7,8-dihydrofolate + dTMP. It functions in the pathway pyrimidine metabolism; dTTP biosynthesis. Catalyzes the reductive methylation of 2'-deoxyuridine-5'-monophosphate (dUMP) to 2'-deoxythymidine-5'-monophosphate (dTMP) while utilizing 5,10-methylenetetrahydrofolate (mTHF) as the methyl donor and reductant in the reaction, yielding dihydrofolate (DHF) as a by-product. This enzymatic reaction provides an intracellular de novo source of dTMP, an essential precursor for DNA biosynthesis. The polypeptide is Thymidylate synthase (Bartonella quintana (strain Toulouse) (Rochalimaea quintana)).